The chain runs to 341 residues: MNLSEELDSIYKEAIQKIGSSISEEDLDKNKNDFIGKKGKLTAVLKNVASLSIEEKKTVGQKANELSKKLETFISETKTSLKKKLFEKQAASEFFDVLRPLSKPSNGSLHPITQIQYEIEDIFASMGFSVMDGPEIETDTNNFGALNFTEDHPAREMQDTFYLENGNLLRTHTSAIQVRTLRKLKPPFRIIAPGRVFRYEEVDASHEHTFYQIEGMVVGKDISAANLIDTMQVLLSRIFEKEIKTRLRPGYFPFVEPGFELDISCLVCDGKGCPVCKQSGWLELLPCGLIHPNVLSHAGLDPKEWTGFAFGLGLDRLVMMRYGIHDIRYFQSGNLRFLKQF.

Glutamate 256 contacts Mg(2+).

The protein belongs to the class-II aminoacyl-tRNA synthetase family. Phe-tRNA synthetase alpha subunit type 1 subfamily. As to quaternary structure, tetramer of two alpha and two beta subunits. It depends on Mg(2+) as a cofactor.

The protein resides in the cytoplasm. It catalyses the reaction tRNA(Phe) + L-phenylalanine + ATP = L-phenylalanyl-tRNA(Phe) + AMP + diphosphate + H(+). This chain is Phenylalanine--tRNA ligase alpha subunit, found in Leptospira interrogans serogroup Icterohaemorrhagiae serovar Lai (strain 56601).